The sequence spans 152 residues: MFRTAVRNYSSRVGQKFQSLEQIKEYLKKPTWDTKTLLKGSQKSLEIDTPKLHRLLQLSGLSTDLDAGKERQLLNDLNAQLTMMNKLQEIECKEFDLIETQHSPLKFQDIRNATGELRQSSKKGETGQWNPLDLASVKSEGFYVVNEKLGKE.

It belongs to the GatF family. As to quaternary structure, subunit of the heterotrimeric GatFAB amidotransferase (AdT) complex, composed of A, B and F subunits.

The protein localises to the mitochondrion inner membrane. It carries out the reaction L-glutamyl-tRNA(Gln) + L-glutamine + ATP + H2O = L-glutaminyl-tRNA(Gln) + L-glutamate + ADP + phosphate + H(+). In terms of biological role, allows the formation of correctly charged Gln-tRNA(Gln) through the transamidation of misacylated Glu-tRNA(Gln) in the mitochondria. The reaction takes place in the presence of glutamine and ATP through an activated gamma-phospho-Glu-tRNA(Gln). Required for proper protein synthesis within the mitochondrion. The chain is Glutamyl-tRNA(Gln) amidotransferase subunit F, mitochondrial from Komagataella phaffii (strain GS115 / ATCC 20864) (Yeast).